Here is a 179-residue protein sequence, read N- to C-terminus: Peptidyl-prolyl cis-trans isomerase A (179 aa).

In terms of domain architecture, PPIase cyclophilin-type spans 15 to 178; it reads FFDITIGGVE…KPVVIANCGQ (164 aa).

It belongs to the cyclophilin-type PPIase family.

The protein localises to the cytoplasm. It is found in the cytosol. The catalysed reaction is [protein]-peptidylproline (omega=180) = [protein]-peptidylproline (omega=0). Binds cyclosporin A (CsA). CsA mediates some of its effects via an inhibitory action on PPIase. In terms of biological role, PPIase that catalyzes the cis-trans isomerization of proline imidic peptide bonds in oligopeptides and may therefore assist protein folding. The chain is Peptidyl-prolyl cis-trans isomerase A (ppiA) from Dictyostelium discoideum (Social amoeba).